Consider the following 363-residue polypeptide: Dihydroorotate dehydrogenase (quinone) (363 aa).

FMN is bound by residues 62–66 (AGYDK) and threonine 86. Lysine 66 provides a ligand contact to substrate. 111-115 (NRLGF) contacts substrate. Residues asparagine 140 and asparagine 171 each coordinate FMN. Asparagine 171 is a substrate binding site. The Nucleophile role is filled by serine 174. Position 176 (asparagine 176) interacts with substrate. The FMN site is built by lysine 216 and serine 244. 245–246 (NT) lines the substrate pocket. FMN-binding positions include glycine 266, glycine 295, and 316–317 (YT).

Belongs to the dihydroorotate dehydrogenase family. Type 2 subfamily. As to quaternary structure, monomer. The cofactor is FMN.

It is found in the cell membrane. The enzyme catalyses (S)-dihydroorotate + a quinone = orotate + a quinol. Its pathway is pyrimidine metabolism; UMP biosynthesis via de novo pathway; orotate from (S)-dihydroorotate (quinone route): step 1/1. Catalyzes the conversion of dihydroorotate to orotate with quinone as electron acceptor. In Chelativorans sp. (strain BNC1), this protein is Dihydroorotate dehydrogenase (quinone).